The chain runs to 348 residues: Dihydroorotase (348 aa).

Positions 17 and 19 each coordinate Zn(2+). Residues 19–21 (HLR) and Asn-45 each bind substrate. 3 residues coordinate Zn(2+): Lys-103, His-140, and His-178. Lys-103 bears the N6-carboxylysine mark. Position 140 (His-140) interacts with substrate. Leu-223 lines the substrate pocket. Asp-251 serves as a coordination point for Zn(2+). Residue Asp-251 is part of the active site. Substrate-binding residues include His-255 and Ala-267.

Belongs to the metallo-dependent hydrolases superfamily. DHOase family. Class II DHOase subfamily. As to quaternary structure, homodimer. Requires Zn(2+) as cofactor.

It carries out the reaction (S)-dihydroorotate + H2O = N-carbamoyl-L-aspartate + H(+). The protein operates within pyrimidine metabolism; UMP biosynthesis via de novo pathway; (S)-dihydroorotate from bicarbonate: step 3/3. Functionally, catalyzes the reversible cyclization of carbamoyl aspartate to dihydroorotate. The chain is Dihydroorotase from Escherichia coli O17:K52:H18 (strain UMN026 / ExPEC).